The chain runs to 644 residues: MILFITLPLLNVIISGLLSRYIGVNNIKRLNIINLFIILILLIYYYINIIKTDNEYTLKIIEWINIEYLNINYSFNLDLLSITMLIPIILISLIVNIFAWEYMKDDSHNPRFYTYLALFTLFMIILVLGDNYLILFLGWEYIGIASFLLIGFWYNNIDNIKSSLNALFINKIGDIFFIIALIYLIYIYKSLNYSLIFSLVSYINIDINNIIILCLVIAASAKSAQFGLHNWLIWAMAGPTPVSVLLHAATLVIAGIYLLMRSSPILENCPNILLFNLWLGAITSLISGLIAINSNDIKRIIALSTMSQLGIMFISIGLSSYNLTLYHVLCHSLYKALLFICAGTIIHSLNNELQDIRFMGGLLIYMPITYICMLIGSLSLMGLPSLTGYYSKDIIIESSIGIFTISGLIIYWLVVLSSLLTNIYILKLIYYSFINIPQLNKYIYNSLSLNNTYSLPFNFKFNFDKSWMAIICMIILSIGSLFIGYLLQDIYLGQGNSINGLFIYPNNLNLIETHFAINIYYKWIPIFNIFISILLIIYLYEFNYKLLYIYNNPLFYNFYILFNTRFLFDQILNNYIIRYTLYLSKSLNSLLDKGFLYTLGPNGLNYLLNLLSFNIIKFNTHLFNHYLIYISFSLLLFIYLQFDL.

A run of 18 helical transmembrane segments spans residues 4–23 (FITL…RYIG), 30–49 (LNII…YINI), 78–100 (DLLS…IFAW), 112–129 (FYTY…LVLG), 133–155 (LILF…FWYN), 167–189 (LFIN…YIYK), 199–221 (LVSY…AASA), 234–256 (WAMA…IAGI), 271–293 (NILL…IAIN), 300–322 (IIAL…SSYN), 327–349 (HVLC…IHSL), 361–383 (GLLI…LMGL), 398–420 (SSIG…SSLL), 466–488 (SWMA…YLLQ), 517–539 (INIY…IIYL), 546–568 (LLYI…RFLF), 594–616 (GFLY…FNII), and 623–642 (FNHY…YLQF).

It belongs to the complex I subunit 5 family.

The protein resides in the mitochondrion inner membrane. The enzyme catalyses a ubiquinone + NADH + 5 H(+)(in) = a ubiquinol + NAD(+) + 4 H(+)(out). In terms of biological role, core subunit of the mitochondrial membrane respiratory chain NADH dehydrogenase (Complex I) that is believed to belong to the minimal assembly required for catalysis. Complex I functions in the transfer of electrons from NADH to the respiratory chain. The immediate electron acceptor for the enzyme is believed to be ubiquinone. In Wickerhamomyces canadensis (Yeast), this protein is NADH-ubiquinone oxidoreductase chain 5 (ND5).